The following is a 468-amino-acid chain: ATP synthase subunit beta (468 aa).

155–162 (GGAGVGKT) serves as a coordination point for ATP.

This sequence belongs to the ATPase alpha/beta chains family. In terms of assembly, F-type ATPases have 2 components, CF(1) - the catalytic core - and CF(0) - the membrane proton channel. CF(1) has five subunits: alpha(3), beta(3), gamma(1), delta(1), epsilon(1). CF(0) has three main subunits: a(1), b(2) and c(9-12). The alpha and beta chains form an alternating ring which encloses part of the gamma chain. CF(1) is attached to CF(0) by a central stalk formed by the gamma and epsilon chains, while a peripheral stalk is formed by the delta and b chains.

The protein resides in the cell membrane. It carries out the reaction ATP + H2O + 4 H(+)(in) = ADP + phosphate + 5 H(+)(out). Functionally, produces ATP from ADP in the presence of a proton gradient across the membrane. The catalytic sites are hosted primarily by the beta subunits. The sequence is that of ATP synthase subunit beta from Streptococcus mutans serotype c (strain ATCC 700610 / UA159).